A 940-amino-acid polypeptide reads, in one-letter code: Protein translocase subunit SecA (940 aa).

ATP contacts are provided by residues Gln-87, 105–109 (GEGKT), and Asp-494. The interval 879-940 (AQQQKKAVEG…KCHGASEASV (62 aa)) is disordered. Positions 884 to 898 (KAVEGRATADGKLDE) are enriched in basic and acidic residues. Over residues 900 to 915 (SVAAAARPAAASRPAV) the composition is skewed to low complexity. Residues Cys-921, Cys-923, Cys-932, and His-933 each coordinate Zn(2+).

The protein belongs to the SecA family. In terms of assembly, monomer and homodimer. Part of the essential Sec protein translocation apparatus which comprises SecA, SecYEG and auxiliary proteins SecDF-YajC and YidC. Zn(2+) is required as a cofactor.

The protein resides in the cell inner membrane. It localises to the cytoplasm. It carries out the reaction ATP + H2O + cellular proteinSide 1 = ADP + phosphate + cellular proteinSide 2.. In terms of biological role, part of the Sec protein translocase complex. Interacts with the SecYEG preprotein conducting channel. Has a central role in coupling the hydrolysis of ATP to the transfer of proteins into and across the cell membrane, serving as an ATP-driven molecular motor driving the stepwise translocation of polypeptide chains across the membrane. This chain is Protein translocase subunit SecA, found in Myxococcus xanthus (strain DK1622).